The sequence spans 549 residues: Limonene dehydrogenase subunit B (549 aa).

The protein belongs to the carotenoid/retinoid oxidoreductase family. Heterodimer composed of CtmA and CtmB. It depends on FAD as a cofactor.

It localises to the cytoplasm. It catalyses the reaction (4S)-limonene + A + H2O = (4S)-perillyl alcohol + AH2. It carries out the reaction (4R)-limonene + A + H2O = (4R)-perillyl alcohol + AH2. It participates in terpene metabolism; monoterpene degradation. The presence of molecular oxygen causes a 40% reduction in specific activity. In terms of biological role, involved in the degradation of the cyclic monoterpene limonene. Catalyzes the oxidation of limonene at the primary methyl group, forming perillyl alcohol. Hydroxylates the R- and S-enantiomers to their respective enantiomeric form of perillyl alcohol at a similar rate. Native CtmAB oxidizes a wide range of monocyclic monoterpenes containing the allylic methyl group motif (1-methyl-cyclohex-1-ene). Can also catalyze the reverse reaction, the reduction of perillyl alcohol to limonene, but with lower efficiency. Cannot use molecular oxygen as an electron acceptor. The natural electron acceptor is likely a heterodimeric electron transfer flavoprotein (ETF). The polypeptide is Limonene dehydrogenase subunit B (Castellaniella defragrans (strain DSM 12143 / CCUG 39792 / 65Phen) (Alcaligenes defragrans)).